A 331-amino-acid chain; its full sequence is Isopenicillin N synthase (331 aa).

Isopenicillin N contacts are provided by Arg87, Tyr91, Ser183, and Tyr189. The N-[(5S)-5-amino-5-carboxypentanoyl]-L-cysteinyl-D-valine site is built by Arg87, Tyr91, Ser183, Tyr189, His214, and Asp216. In terms of domain architecture, Fe2OG dioxygenase spans 176–288; sequence KKEDALSSVV…RQSLPFFVNL (113 aa). Positions 214, 216, and 270 each coordinate Fe(2+). A 2-oxoglutarate-binding site is contributed by Arg279. Residue Ser281 participates in isopenicillin N binding. Ser281 provides a ligand contact to N-[(5S)-5-amino-5-carboxypentanoyl]-L-cysteinyl-D-valine.

The protein belongs to the iron/ascorbate-dependent oxidoreductase family. In terms of assembly, monomer. It depends on Fe(2+) as a cofactor.

The protein resides in the cytoplasm. The protein localises to the cytosol. It catalyses the reaction N-[(5S)-5-amino-5-carboxypentanoyl]-L-cysteinyl-D-valine + O2 = isopenicillin N + 2 H2O. The protein operates within antibiotic biosynthesis; penicillin G biosynthesis; penicillin G from L-alpha-aminoadipate and L-cysteine and L-valine: step 2/3. Its function is as follows. Isopenicillin N synthase; part of the gene cluster that mediates the biosynthesis of penicillin, the world's most important antibiotic. IpnA catalyzes the cyclization of the tripeptide N-[(5S)-5-amino-5-carboxypentanoyl]-L-cysteinyl-D-valine (LLD-ACV or ACV) to form isopenicillin N (IPN) that contains the beta-lactam nucleus. The penicillin biosynthesis occurs via 3 enzymatic steps, the first corresponding to the production of the tripeptide N-[(5S)-5-amino-5-carboxypentanoyl]-L-cysteinyl-D-valine (LLD-ACV or ACV) by the NRPS acvA. The tripeptide ACV is then cyclized to isopenicillin N (IPN) by the isopenicillin N synthase ipnA that forms the beta-lactam nucleus. Finally, the alpha-aminoadipyl side chain is exchanged for phenylacetic acid by the isopenicillin N acyltransferase aatA to yield penicillin in the peroxisomal matrix. The protein is Isopenicillin N synthase of Penicillium chrysogenum (Penicillium notatum).